A 296-amino-acid polypeptide reads, in one-letter code: Cytidine deaminase (296 aa).

CMP/dCMP-type deaminase domains are found at residues 47–167 (EESE…FGPS) and 186–296 (DSSD…IDPA). Residue 88–90 (NLE) participates in substrate binding. His-101 serves as a coordination point for Zn(2+). The active-site Proton donor is Glu-103. Zn(2+) is bound by residues Cys-128 and Cys-131.

The protein belongs to the cytidine and deoxycytidylate deaminase family. Homodimer. Requires Zn(2+) as cofactor.

It catalyses the reaction cytidine + H2O + H(+) = uridine + NH4(+). It carries out the reaction 2'-deoxycytidine + H2O + H(+) = 2'-deoxyuridine + NH4(+). Its function is as follows. This enzyme scavenges exogenous and endogenous cytidine and 2'-deoxycytidine for UMP synthesis. The sequence is that of Cytidine deaminase from Shewanella woodyi (strain ATCC 51908 / MS32).